The primary structure comprises 97 residues: Scorpine-like peptide Ev37 (97 aa).

A signal peptide spans 1 to 19 (MNSKLTVIVLLALITIASC). The BetaSPN-type CS-alpha/beta domain occupies 55-95 (QNLCAFNVDTVGMCDADCKRQGKAKGVCHGTKCKCDVELSY). 3 disulfide bridges follow: C58–C82, C68–C87, and C72–C89.

This sequence belongs to the long chain scorpion toxin family. Class 3 subfamily. In terms of tissue distribution, expressed by the venom gland.

It is found in the secreted. Functionally, selectively inhibits Kv1.3/KCNA3 channel (IC(50)=0.95 uM). Both N-terminal and C-terminal domains are likely involved in the interaction with Kv1.3/KCNA3, since neither its N-terminal domain (1-36) nor its C-terminal domain (37-78) block Kv1.3/KCNA3 channel. This Euscorpiops validus (Scorpion) protein is Scorpine-like peptide Ev37.